The sequence spans 374 residues: S-adenosylmethionine:tRNA ribosyltransferase-isomerase (374 aa).

The protein belongs to the QueA family. In terms of assembly, monomer.

It localises to the cytoplasm. The catalysed reaction is 7-aminomethyl-7-carbaguanosine(34) in tRNA + S-adenosyl-L-methionine = epoxyqueuosine(34) in tRNA + adenine + L-methionine + 2 H(+). It functions in the pathway tRNA modification; tRNA-queuosine biosynthesis. Functionally, transfers and isomerizes the ribose moiety from AdoMet to the 7-aminomethyl group of 7-deazaguanine (preQ1-tRNA) to give epoxyqueuosine (oQ-tRNA). This is S-adenosylmethionine:tRNA ribosyltransferase-isomerase from Sorangium cellulosum (strain So ce56) (Polyangium cellulosum (strain So ce56)).